Reading from the N-terminus, the 371-residue chain is uncharacterized protein (371 aa).

Transmembrane regions (helical) follow at residues 9 to 29 (FTLDNIIQIGISLAILLVFLI), 58 to 78 (VLAFDKPARWFFVALGLFLAI), 98 to 118 (LIVALLCWGLCNLTATSSFIF), 133 to 153 (LAPFLSKLLRFVIIALSVSVI), 159 to 179 (YDVNGFVAGLGLGGLAFALAA), 183 to 203 (ISNFFGGIIIITEKPFTIGDW), and 330 to 350 (IIEILGAEGVQFAYPGQMVVV).

This sequence belongs to the MscS (TC 1.A.23) family.

Its subcellular location is the cell membrane. Functionally, may play a role in resistance to osmotic downshock. This is an uncharacterized protein from Bacillus subtilis (strain 168).